Here is a 157-residue protein sequence, read N- to C-terminus: Probable succinate transporter subunit YjjB (157 aa).

Helical transmembrane passes span 8–28, 50–70, 87–107, and 129–149; these read LALAQDMILAAIPAVGFAMVF, MILMTSGLNIEWSTFMASMLG, VFTVAAVIPMFPGISAYTAMI, and FLTASSIVGALSIGLSIPGLW.

Belongs to the ThrE exporter (TC 2.A.79) family. In terms of assembly, the transporter is composed of YjjB and YjjP.

It is found in the cell inner membrane. Involved in succinate export with YjjP. Both proteins are required for export. In Escherichia coli O157:H7 (strain EC4115 / EHEC), this protein is Probable succinate transporter subunit YjjB.